A 505-amino-acid chain; its full sequence is ATP synthase subunit alpha (505 aa).

171–178 (GDRQTGKT) serves as a coordination point for ATP.

This sequence belongs to the ATPase alpha/beta chains family. F-type ATPases have 2 components, CF(1) - the catalytic core - and CF(0) - the membrane proton channel. CF(1) has five subunits: alpha(3), beta(3), gamma(1), delta(1), epsilon(1). CF(0) has three main subunits: a(1), b(2) and c(9-12). The alpha and beta chains form an alternating ring which encloses part of the gamma chain. CF(1) is attached to CF(0) by a central stalk formed by the gamma and epsilon chains, while a peripheral stalk is formed by the delta and b chains.

Its subcellular location is the cell inner membrane. It catalyses the reaction ATP + H2O + 4 H(+)(in) = ADP + phosphate + 5 H(+)(out). Produces ATP from ADP in the presence of a proton gradient across the membrane. The alpha chain is a regulatory subunit. The protein is ATP synthase subunit alpha of Campylobacter fetus subsp. fetus (strain 82-40).